The sequence spans 508 residues: Aldehyde dehydrogenase family 7 member A1 (508 aa).

Glycine 244–glycine 249 serves as a coordination point for NAD(+). Glutamate 266 (proton acceptor) is an active-site residue. Residue cysteine 300 is the Nucleophile of the active site.

This sequence belongs to the aldehyde dehydrogenase family. As to quaternary structure, homotetramer.

The catalysed reaction is an aldehyde + NAD(+) + H2O = a carboxylate + NADH + 2 H(+). Its function is as follows. May play a role in fruit development. In Malus domestica (Apple), this protein is Aldehyde dehydrogenase family 7 member A1.